Here is a 337-residue protein sequence, read N- to C-terminus: Regulator of RpoS (337 aa).

Residues 9–123 (QILIVEDEQV…NRLREMVFAC (115 aa)) form the Response regulatory domain. The residue at position 58 (aspartate 58) is a 4-aspartylphosphate.

The protein belongs to the RssB family. In terms of assembly, binds to RpoS. In terms of processing, phosphorylated. Phosphorylation stimulates the interaction with RpoS and, therefore, the proteolysis of RpoS.

In terms of biological role, regulates the turnover of the sigma S factor (RpoS) by promoting its proteolysis in exponentially growing cells. Acts by binding and delivering RpoS to the ClpXP protease. RssB is not co-degraded with RpoS, but is released from the complex and can initiate a new cycle of RpoS recognition and degradation. The chain is Regulator of RpoS from Shigella flexneri.